Reading from the N-terminus, the 507-residue chain is Maturase K (507 aa).

The protein belongs to the intron maturase 2 family. MatK subfamily.

It localises to the plastid. Its subcellular location is the chloroplast. Functionally, usually encoded in the trnK tRNA gene intron. Probably assists in splicing its own and other chloroplast group II introns. The polypeptide is Maturase K (Asimina triloba (Pawpaw)).